A 382-amino-acid chain; its full sequence is MHPIVIVGTGLAGFNTVKEFRKLDKETPIVMLTADDGRNYSKPMLSAGFSKGKTADDLCMATPEKVAEQLNVDVRTGVHVAGIDATNKRVLLPDDHLDYSKLVLALGADTWTPPLEGDAVGEVFSVNDLMDYGKFRAAVEGKKTVTILGGGLIGCEFANDLSNGGFKVSLVEPMGRCLPLLLPEQASEAVGRGLADLGVQFHFGPLAKAVHHGDNGQLVTELSDGSQLESDVVLSAIGLRPRISLAKEAGLDTNRGILTDKSLRTSAEHIYALGDCAEVQGHVLPYVLPLMASARALAKTLAGETTEVSYGVMPVTIKTPACPVVVCPAAEGSEGAWEVEAEGNTVQALFRSKDGSLLGYALTGEAVKEKMKLNKELPAIMP.

FAD-binding positions include 9 to 12, 33 to 34, Lys42, Val80, Glu156, Asp275, Val287, and Lys318; these read TGLA and TA.

It belongs to the FAD-dependent oxidoreductase family. Homodimer. Requires FAD as cofactor.

It localises to the cytoplasm. The enzyme catalyses 2 reduced [rubredoxin] + NAD(+) + H(+) = 2 oxidized [rubredoxin] + NADH. The protein operates within hydrocarbon metabolism; alkane degradation. Functionally, involved in the hydrocarbon hydroxylating system, which transfers electrons from NADH to rubredoxin reductase and then through rubredoxin to alkane 1 monooxygenase. The polypeptide is Rubredoxin-NAD(+) reductase (rubB) (Alcanivorax borkumensis (strain ATCC 700651 / DSM 11573 / NCIMB 13689 / SK2)).